A 381-amino-acid chain; its full sequence is Sulfite reductase, dissimilatory-type subunit beta (381 aa).

C151, C188, C189, C193, C231, C258, C261, and C264 together coordinate [4Fe-4S] cluster. A siroheme-binding site is contributed by C193. The 4Fe-4S ferredoxin-type domain maps to 249-276; that stretch reads NTIAIKNERCMYCGNCYTMCPALPISDG.

Heterohexamer of two alpha, two beta and two gamma subunits. [4Fe-4S] cluster is required as a cofactor. Siroheme serves as cofactor.

It carries out the reaction [DsrC protein]-trisulfide + NAD(+) + 3 H2O = [DsrC protein]-dithiol + sulfite + NADH + 3 H(+). Its function is as follows. Catalyzes the reduction of sulfite to sulfide. This is the terminal oxidation reaction in sulfate respiration, a process catalyzed by the sulfate-reducing bacteria. The protein is Sulfite reductase, dissimilatory-type subunit beta (dsvB) of Nitratidesulfovibrio vulgaris (strain ATCC 29579 / DSM 644 / CCUG 34227 / NCIMB 8303 / VKM B-1760 / Hildenborough) (Desulfovibrio vulgaris).